A 209-amino-acid polypeptide reads, in one-letter code: MEQPRKAVVVTGFGPFGEHTVNASWIAVQELEKLGLGDSVDLHVYEIPVEYQTVQRLIPALWEKHSPQLVVHVGVSGMATTVTLEKCGHNKGYKGLDNCRFCPGSQCCVEDGPESIDSIIDMDAVCKRVTTLGLDVSVTISQDAGRYLCDFTYYTSLYQGRGRSAFVHVPPLGKPYNADQLGRALRAIIEEMLGVLEQAEGDISCCRQL.

Active-site residues include Glu-85, Cys-149, and His-168.

The protein belongs to the peptidase C15 family. Monomer.

The protein localises to the cytoplasm. The enzyme catalyses Release of an N-terminal pyroglutamyl group from a polypeptide, the second amino acid generally not being Pro.. Functionally, removes 5-oxoproline from various penultimate amino acid residues except L-proline. This is Pyroglutamyl-peptidase 1 (Pgpep1) from Mus musculus (Mouse).